A 349-amino-acid polypeptide reads, in one-letter code: UDP-3-O-acylglucosamine N-acyltransferase (349 aa).

Catalysis depends on histidine 248, which acts as the Proton acceptor.

Belongs to the transferase hexapeptide repeat family. LpxD subfamily. As to quaternary structure, homotrimer.

It catalyses the reaction a UDP-3-O-[(3R)-3-hydroxyacyl]-alpha-D-glucosamine + a (3R)-hydroxyacyl-[ACP] = a UDP-2-N,3-O-bis[(3R)-3-hydroxyacyl]-alpha-D-glucosamine + holo-[ACP] + H(+). Its pathway is bacterial outer membrane biogenesis; LPS lipid A biosynthesis. Functionally, catalyzes the N-acylation of UDP-3-O-acylglucosamine using 3-hydroxyacyl-ACP as the acyl donor. Is involved in the biosynthesis of lipid A, a phosphorylated glycolipid that anchors the lipopolysaccharide to the outer membrane of the cell. The polypeptide is UDP-3-O-acylglucosamine N-acyltransferase (Colwellia psychrerythraea (strain 34H / ATCC BAA-681) (Vibrio psychroerythus)).